The sequence spans 582 residues: Formate--tetrahydrofolate ligase (582 aa).

65–72 serves as a coordination point for ATP; it reads TPLGEGKT.

Belongs to the formate--tetrahydrofolate ligase family.

The enzyme catalyses (6S)-5,6,7,8-tetrahydrofolate + formate + ATP = (6R)-10-formyltetrahydrofolate + ADP + phosphate. Its pathway is one-carbon metabolism; tetrahydrofolate interconversion. This is Formate--tetrahydrofolate ligase from Vibrio vulnificus (strain CMCP6).